A 514-amino-acid chain; its full sequence is Zinc finger and BTB domain-containing protein 2 (514 aa).

The region spanning 24 to 89 (CDCTVAIGDV…MYTGKMAPQL (66 aa)) is the BTB domain. Residues K147 and K154 each participate in a glycyl lysine isopeptide (Lys-Gly) (interchain with G-Cter in SUMO2) cross-link. The interval 149 to 231 (ASAPEKLGRD…LEASSSDEQP (83 aa)) is disordered. Composition is skewed to polar residues over residues 161–200 (PQTS…PLQT) and 222–231 (LEASSSDEQP). The segment at 254–276 (YACHLCGRRFTLRSSLREHLQIH) adopts a C2H2-type 1 zinc-finger fold. Position 341 is a phosphoserine (S341). K362 participates in a covalent cross-link: Glycyl lysine isopeptide (Lys-Gly) (interchain with G-Cter in SUMO2). The C2H2-type 2 zinc finger occupies 363 to 385 (YECTICGRKFIQKSHWREHMYIH). The C2H2-type 3; atypical zinc finger occupies 390 to 410 (FKCSTCDKSFCRANQAARHVC). The C2H2-type 4; atypical zinc-finger motif lies at 448–468 (YKCNLCDKTFSTPNEVVKHSC). Residues K465, K505, and K506 each participate in a glycyl lysine isopeptide (Lys-Gly) (interchain with G-Cter in SUMO2) cross-link.

It localises to the nucleus. May be involved in transcriptional regulation. This Homo sapiens (Human) protein is Zinc finger and BTB domain-containing protein 2 (ZBTB2).